Here is a 219-residue protein sequence, read N- to C-terminus: uncharacterized protein (219 aa).

The next 2 helical transmembrane spans lie at Val81–Ile101 and Pro168–Val188.

The protein localises to the membrane. This is an uncharacterized protein from Saccharomyces cerevisiae (strain ATCC 204508 / S288c) (Baker's yeast).